We begin with the raw amino-acid sequence, 507 residues long: E3 SUMO-protein ligase PIAS4 (507 aa).

The residue at position 2 (alanine 2) is an N-acetylalanine. Lysine 9 is covalently cross-linked (Glycyl lysine isopeptide (Lys-Gly) (interchain with G-Cter in SUMO2)). An SAP domain is found at 12-46 (VMSFRVSDLQMLLGFVGRSKSGLKHELVTRALQLV). Positions 20 to 24 (LQMLL) match the LXXLL motif motif. Lysine 35 is covalently cross-linked (Glycyl lysine isopeptide (Lys-Gly) (interchain with G-Cter in SUMO); alternate). Lysine 35 is covalently cross-linked (Glycyl lysine isopeptide (Lys-Gly) (interchain with G-Cter in SUMO2); alternate). Residues lysine 56, lysine 59, lysine 68, and lysine 69 each participate in a glycyl lysine isopeptide (Lys-Gly) (interchain with G-Cter in SUMO2) cross-link. Lysine 107 bears the N6-acetyllysine mark. The region spanning 112–272 (LGRLPTKTLK…SVALYLVRQL (161 aa)) is the PINIT domain. Lysine 118 is covalently cross-linked (Glycyl lysine isopeptide (Lys-Gly) (interchain with G-Cter in SUMO2)). A Glycyl lysine isopeptide (Lys-Gly) (interchain with G-Cter in SUMO) cross-link involves residue lysine 128. The segment at 304–385 (PDSEIATTGV…LSKILSECEG (82 aa)) adopts an SP-RING-type zinc-finger fold. Zn(2+) is bound by residues cysteine 335, histidine 337, cysteine 358, and cysteine 361. The tract at residues 426–507 (APASSTPGIG…PFQKGLVPAC (82 aa)) is disordered. A compositionally biased stretch (gly residues) spans 434–450 (IGSGLSGPGSAGSGAGA). The segment covering 474–489 (SEDEDEDEDDDEDEDE) has biased composition (acidic residues).

Belongs to the PIAS family. Interacts with AR, GATA2, LEF1, TP53 and STAT1 (IFNG-induced). Interacts with TICAM1. Interacts with MTA1. Interacts with PRDM1/Blimp-1. Interacts with TRIM32 upon treatment with UVB and TNF-alpha. As to quaternary structure, (Microbial infection) Interacts ewith Moloney murine leukemia virus Capsid protein p30. Post-translationally, sumoylated. Lys-35 is the main site of sumoylation. Sumoylation is required for TCF4 sumoylation and transcriptional activation. Represses LEF1 transcriptional activity. SUMO1 is the preferred conjugate. In terms of processing, ubiquitinated by TRIM32 upon treatment with UVB and TNF-alpha. In terms of tissue distribution, widely expressed, with highest levels in testis. Also expressed in vascular endothelial cells, in primary keratinocytes and in the CNS, including cortex, olfactory bulb, spinal cord, thalamus and trigeminal ganglion. Low expression, if any, in liver and lung.

It is found in the nucleus. Its subcellular location is the PML body. The enzyme catalyses S-ubiquitinyl-[E2 ubiquitin-conjugating enzyme]-L-cysteine + [acceptor protein]-L-lysine = [E2 ubiquitin-conjugating enzyme]-L-cysteine + N(6)-ubiquitinyl-[acceptor protein]-L-lysine.. It functions in the pathway protein modification; protein sumoylation. In terms of biological role, functions as an E3-type small ubiquitin-like modifier (SUMO) ligase, stabilizing the interaction between UBE2I and the substrate, and as a SUMO-tethering factor. Mediates sumoylation of ALKBH5, AXIN1, CEBPA, KLF8, GATA2, PARK7, HERC2, MYB, TCF4 and RNF168. Plays a crucial role as a transcriptional coregulation in various cellular pathways, including the STAT pathway, the p53/TP53 pathway, the Wnt pathway and the steroid hormone signaling pathway. Involved in gene silencing. In Wnt signaling, represses LEF1 and enhances TCF4 transcriptional activities through promoting their sumoylations. Enhances the sumoylation of MTA1 and may participate in its paralog-selective sumoylation. Binds to AT-rich DNA sequences, known as matrix or scaffold attachment regions (MARs/SARs). Catalyzes conjugation of SUMO2 to KAT5 in response to DNA damage, facilitating repair of DNA double-strand breaks (DSBs) via homologous recombination (HR). Mediates sumoylation of PARP1 in response to PARP1 trapping to chromatin. Mediates sumoylation of KLF8, repressiing KLF8 transcriptional activity and cell cycle progression into G(1) phase. Sumoylates ALKBH5 downstream of MAPK8/JNK1 and MAPK9/JNK2 in response to reactive oxygen species (ROS), inhibiting ALKBH5 RNA demethylase activity. The protein is E3 SUMO-protein ligase PIAS4 (Pias4) of Mus musculus (Mouse).